Consider the following 164-residue polypeptide: Pyruvoyl-dependent arginine decarboxylase (164 aa).

S52 bears the Pyruvic acid (Ser) mark.

It belongs to the PdaD family. Requires pyruvate as cofactor.

The enzyme catalyses L-arginine + H(+) = agmatine + CO2. This chain is Pyruvoyl-dependent arginine decarboxylase, found in Methanococcus vannielii (strain ATCC 35089 / DSM 1224 / JCM 13029 / OCM 148 / SB).